Reading from the N-terminus, the 122-residue chain is MEGKPLLTSKQKTAVVCGVPTQVVCTAFSSHILVVVTQLGKMGTLVSLEPSSVTSDVGKPVLTTKVLLGKDEPLVHVFAKNLVAFVSQEAGNRAVLLALATKDKSMEAVKALQEVIQACQVW.

M1 carries the post-translational modification N-acetylmethionine.

The protein belongs to the PSMG3 family. As to quaternary structure, homodimer. Interacts with PSMG4. Interacts directly with alpha and beta subunits of the 20S proteasome but dissociates before the formation of half-proteasomes, probably upon recruitment of POMP.

Chaperone protein which promotes assembly of the 20S proteasome. May cooperate with PSMG1-PSMG2 heterodimers to orchestrate the correct assembly of proteasomes. The sequence is that of Proteasome assembly chaperone 3 (PSMG3) from Bos taurus (Bovine).